Here is a 379-residue protein sequence, read N- to C-terminus: Probable protein arginine N-methyltransferase 6.1 (379 aa).

The interval methionine 1–alanine 35 is disordered. Over residues leucine 19 to alanine 35 the composition is skewed to low complexity. Residues aspartate 45–methionine 379 form the SAM-dependent MTase PRMT-type domain. Positions 58, 67, 91, 113, and 142 each coordinate S-adenosyl-L-methionine. Residues glutamate 156 and glutamate 165 contribute to the active site.

It belongs to the class I-like SAM-binding methyltransferase superfamily. Protein arginine N-methyltransferase family. PRMT6 subfamily.

Arginine methyltransferase that can both catalyze the formation of omega-N monomethylarginine (MMA) and asymmetrical dimethylarginine (aDMA). The protein is Probable protein arginine N-methyltransferase 6.1 (PRMT6.1) of Oryza sativa subsp. indica (Rice).